The chain runs to 130 residues: Small ribosomal subunit protein uS13 (130 aa).

Positions 97–116 are enriched in basic residues; that stretch reads PVRGQRTKTNARTRRGKRKT. Positions 97–130 are disordered; that stretch reads PVRGQRTKTNARTRRGKRKTVGAGKSTSSIKRVK. Residues 121 to 130 show a composition bias toward polar residues; sequence KSTSSIKRVK.

The protein belongs to the universal ribosomal protein uS13 family. In terms of assembly, part of the 30S ribosomal subunit. Forms a loose heterodimer with protein S19. Forms two bridges to the 50S subunit in the 70S ribosome.

Its function is as follows. Located at the top of the head of the 30S subunit, it contacts several helices of the 16S rRNA. In the 70S ribosome it contacts the 23S rRNA (bridge B1a) and protein L5 of the 50S subunit (bridge B1b), connecting the 2 subunits; these bridges are implicated in subunit movement. Contacts the tRNAs in the A and P-sites. The chain is Small ribosomal subunit protein uS13 from Endomicrobium trichonymphae.